We begin with the raw amino-acid sequence, 251 residues long: Fibroblast growth factor 23 (251 aa).

Positions 1–24 are cleaved as a signal peptide; the sequence is MLGTCLRLLVGVLCTVCSLGTARA. C95 and C113 are joined by a disulfide. O-linked (GalNAc) threonine glycosylation is found at T171 and T178. Residues 175 to 251 form a disordered region; that stretch reads RRHTRSAEDP…DRCRPFPRFV (77 aa). The span at 179-189 shows a compositional bias: basic and acidic residues; that stretch reads RSAEDPPERDP. S180 bears the Phosphoserine; by FAM20C mark.

It belongs to the heparin-binding growth factors family. Interacts with FGFR1. Interacts with FGFR2, FGFR3 and FGFR4. Affinity between fibroblast growth factors (FGFs) and their receptors is increased by KL and heparan sulfate glycosaminoglycans that function as coreceptors. Post-translationally, following secretion this protein is inactivated by cleavage into a N-terminal fragment and a C-terminal fragment. The processing is effected by proprotein convertases. In terms of processing, O-glycosylated at Thr-171 and Thr-178 by GALNT3 and glycosylation of Thr-178 requires previous glycosylation at Thr171. Glycosylation is necessary for secretion; it blocks processing by proprotein convertases when the O-glycan is alpha 2,6-sialylated. Competition between proprotein convertase cleavage and block of cleavage by O-glycosylation determines the level of secreted active FGF23. Phosphorylation at Ser-180 mediated by FAM20C slows down glycosylation at Thr-178 notably. As to expression, mainly expressed in the brain and thymus at low levels. In brain; preferentially expressed in the ventrolateral thalamic nucleus.

Its subcellular location is the secreted. In terms of biological role, regulator of phosphate homeostasis. Inhibits renal tubular phosphate transport by reducing SLC34A1 levels. Acts directly on the parathyroid to decrease PTH secretion. Regulator of vitamin-D metabolism. Negatively regulates osteoblasts differentiation and matrix mineralization. Up-regulates EGR1 expression in the presence of KL. This is Fibroblast growth factor 23 (Fgf23) from Mus musculus (Mouse).